A 276-amino-acid chain; its full sequence is Protein PXR1 (276 aa).

The tract at residues Met-1–Asn-23 is disordered. The 47-residue stretch at Thr-25–His-71 folds into the G-patch domain. Residues Asp-152–Lys-172 show a composition bias toward basic and acidic residues. The segment at Asp-152 to Ser-261 is disordered. Residues Thr-173–Lys-218 are compositionally biased toward basic residues. Over residues Asp-219–Ser-228 the composition is skewed to basic and acidic residues. Residues Asp-229–Ala-239 show a composition bias toward polar residues.

The protein belongs to the PINX1 family.

The protein resides in the nucleus. It is found in the nucleolus. Its function is as follows. Involved in rRNA-processing at A0, A1 and A2 sites and negatively regulates telomerase. This chain is Protein PXR1 (PXR1), found in Candida albicans (strain SC5314 / ATCC MYA-2876) (Yeast).